The primary structure comprises 345 residues: MNSELFSPYTIKDVTLKNRIVMSPMCMYSSENEDGQVTNFHLVHYGTRAAGQVGLVMIEATAVLPEGRISNKDLGIWDDSLIEGLHKTTTFIHDNGAKAAIQLAHAGRKAELETDALAPSAIPFNETMKTPVEMSKHQIKDTILAFQQAAIRSKQAGFDVIEIHGAHGYLINEFLSPLSNKRTDEYGGSPENRYRFLREIIDSINEVWNGPLFVRISANDYHPDGLTVQDYVQYTKWMKEQGVDLIDCSSGAVVPARIDVYPGYQVQYAKHIKEHANIATGAVGLITTGAQAEQILNNNEADLIFIGRELLRNPYFPRIAANELGFELEEPHQYERAPGKISTNK.

Residue Ser23–Cys26 coordinates FMN. Residue Tyr28 participates in substrate binding. FMN is bound by residues Ala60 and Gln102. Residue His164–His167 participates in substrate binding. FMN contacts are provided by residues Arg215 and Gly307 to Arg308.

It belongs to the NADH:flavin oxidoreductase/NADH oxidase family. NamA subfamily. In terms of assembly, homotetramer. FMN is required as a cofactor.

It carries out the reaction A + NADPH + H(+) = AH2 + NADP(+). Functionally, catalyzes the reduction of the double bond of an array of alpha,beta-unsaturated aldehydes and ketones. It also reduces the nitro group of nitroester and nitroaromatic compounds. It could have a role in detoxification processes. The protein is NADPH dehydrogenase of Bacillus cereus (strain ZK / E33L).